Consider the following 1562-residue polypeptide: DNA-directed RNA polymerase subunit beta'' (1562 aa).

The tract at residues 1-22 (MVKKKKFKTKNIQNPPFSSQNS) is disordered. Residues 11 to 22 (NIQNPPFSSQNS) are compositionally biased toward polar residues. Zn(2+) contacts are provided by cysteine 275, cysteine 338, cysteine 345, and cysteine 348.

The protein belongs to the RNA polymerase beta' chain family. RpoC2 subfamily. In plastids the minimal PEP RNA polymerase catalytic core is composed of four subunits: alpha, beta, beta', and beta''. When a (nuclear-encoded) sigma factor is associated with the core the holoenzyme is formed, which can initiate transcription. It depends on Zn(2+) as a cofactor.

It is found in the plastid. The protein resides in the chloroplast. The catalysed reaction is RNA(n) + a ribonucleoside 5'-triphosphate = RNA(n+1) + diphosphate. In terms of biological role, DNA-dependent RNA polymerase catalyzes the transcription of DNA into RNA using the four ribonucleoside triphosphates as substrates. This is DNA-directed RNA polymerase subunit beta'' from Chlorella vulgaris (Green alga).